We begin with the raw amino-acid sequence, 37 residues long: Photosystem II reaction center protein T (37 aa).

A helical transmembrane segment spans residues 3-23 (ALVYTFLLVGTLGIIFFAIFF).

It belongs to the PsbT family. PSII is composed of 1 copy each of membrane proteins PsbA, PsbB, PsbC, PsbD, PsbE, PsbF, PsbH, PsbI, PsbJ, PsbK, PsbL, PsbM, PsbT, PsbY, PsbZ, Psb30/Ycf12, at least 3 peripheral proteins of the oxygen-evolving complex and a large number of cofactors. It forms dimeric complexes.

The protein localises to the plastid. It localises to the chloroplast thylakoid membrane. Functionally, found at the monomer-monomer interface of the photosystem II (PS II) dimer, plays a role in assembly and dimerization of PSII. PSII is a light-driven water plastoquinone oxidoreductase, using light energy to abstract electrons from H(2)O, generating a proton gradient subsequently used for ATP formation. The protein is Photosystem II reaction center protein T of Spirogyra maxima (Green alga).